Reading from the N-terminus, the 206-residue chain is ATP phosphoribosyltransferase (206 aa).

The protein belongs to the ATP phosphoribosyltransferase family. Short subfamily. As to quaternary structure, heteromultimer composed of HisG and HisZ subunits.

It is found in the cytoplasm. It carries out the reaction 1-(5-phospho-beta-D-ribosyl)-ATP + diphosphate = 5-phospho-alpha-D-ribose 1-diphosphate + ATP. It participates in amino-acid biosynthesis; L-histidine biosynthesis; L-histidine from 5-phospho-alpha-D-ribose 1-diphosphate: step 1/9. Functionally, catalyzes the condensation of ATP and 5-phosphoribose 1-diphosphate to form N'-(5'-phosphoribosyl)-ATP (PR-ATP). Has a crucial role in the pathway because the rate of histidine biosynthesis seems to be controlled primarily by regulation of HisG enzymatic activity. The protein is ATP phosphoribosyltransferase of Wolinella succinogenes (strain ATCC 29543 / DSM 1740 / CCUG 13145 / JCM 31913 / LMG 7466 / NCTC 11488 / FDC 602W) (Vibrio succinogenes).